Reading from the N-terminus, the 523-residue chain is Synaptotagmin-10 (523 aa).

Over 1 to 55 (MSFRKEDGVSSLCQKALHIITELCFAGQVEWDKCSGIFPADRSGQGGGGTDISVS) the chain is Vesicular. The cysteine motif stretch occupies residues 13 to 35 (CQKALHIITELCFAGQVEWDKCS). A helical transmembrane segment spans residues 56–76 (LLAVVVSFCGLALLVVSLFVF). The Cytoplasmic segment spans residues 77-523 (WKLCWPCWKS…CSSPRPPSTP (447 aa)). Threonine 136 bears the Phosphothreonine mark. C2 domains lie at 231-352 (TCGK…TVWK) and 363-496 (DLGE…THWH). Ca(2+) is bound by residues aspartate 262, aspartate 268, aspartate 320, phenylalanine 321, aspartate 322, serine 325, aspartate 328, aspartate 394, aspartate 400, aspartate 454, and aspartate 456.

It belongs to the synaptotagmin family. In terms of assembly, homodimer; disulfide-linked via the cysteine motif. Can also form heterodimers with SYT3, SYT6, SYT7 and SYT9. It depends on Ca(2+) as a cofactor.

It is found in the cytoplasmic vesicle. It localises to the secretory vesicle membrane. Ca(2+) sensor specifically required for the Ca(2+)-dependent exocytosis of secretory vesicles containing IGF1 in neurons of the olfactory bulb. Exocytosis of IGF1 is required for sensory perception of smell. Not involved in Ca(2+)-dependent synaptic vesicle exocytosis. Acts through Ca(2+) and phospholipid binding to the C2 domain: Ca(2+) induces binding of the C2-domains to phospholipid membranes and to assembled SNARE-complexes; both actions contribute to triggering exocytosis. This is Synaptotagmin-10 (Syt10) from Rattus norvegicus (Rat).